The primary structure comprises 72 residues: Translation initiation factor IF-1 (72 aa).

The S1-like domain occupies 1-72 (MSKSDYIELE…TKGRITFRHK (72 aa)).

Belongs to the IF-1 family. In terms of assembly, component of the 30S ribosomal translation pre-initiation complex which assembles on the 30S ribosome in the order IF-2 and IF-3, IF-1 and N-formylmethionyl-tRNA(fMet); mRNA recruitment can occur at any time during PIC assembly.

The protein localises to the cytoplasm. In terms of biological role, one of the essential components for the initiation of protein synthesis. Stabilizes the binding of IF-2 and IF-3 on the 30S subunit to which N-formylmethionyl-tRNA(fMet) subsequently binds. Helps modulate mRNA selection, yielding the 30S pre-initiation complex (PIC). Upon addition of the 50S ribosomal subunit IF-1, IF-2 and IF-3 are released leaving the mature 70S translation initiation complex. The polypeptide is Translation initiation factor IF-1 (Vesicomyosocius okutanii subsp. Calyptogena okutanii (strain HA)).